Reading from the N-terminus, the 246-residue chain is tRNA (guanine-N(7)-)-methyltransferase (246 aa).

The tract at residues 1–26 is disordered; the sequence is MIENPSPSAANLPEHPSTDASHPRNI. S-adenosyl-L-methionine is bound by residues Glu75, Glu100, Asp127, and Asp150. The active site involves Asp150. Residue Lys154 coordinates substrate. The interaction with RNA stretch occupies residues 156 to 161; it reads KHNKRR. Substrate contacts are provided by residues Asp186 and 225–228; that span reads TKFE.

Belongs to the class I-like SAM-binding methyltransferase superfamily. TrmB family.

The catalysed reaction is guanosine(46) in tRNA + S-adenosyl-L-methionine = N(7)-methylguanosine(46) in tRNA + S-adenosyl-L-homocysteine. Its pathway is tRNA modification; N(7)-methylguanine-tRNA biosynthesis. Catalyzes the formation of N(7)-methylguanine at position 46 (m7G46) in tRNA. This chain is tRNA (guanine-N(7)-)-methyltransferase, found in Polaromonas sp. (strain JS666 / ATCC BAA-500).